Consider the following 231-residue polypeptide: 7-cyano-7-deazaguanine synthase (231 aa).

8-18 (FSGGQDSTTCL) serves as a coordination point for ATP. Zn(2+) contacts are provided by cysteine 188, cysteine 197, cysteine 200, and cysteine 203.

The protein belongs to the QueC family. Zn(2+) is required as a cofactor.

The catalysed reaction is 7-carboxy-7-deazaguanine + NH4(+) + ATP = 7-cyano-7-deazaguanine + ADP + phosphate + H2O + H(+). The protein operates within purine metabolism; 7-cyano-7-deazaguanine biosynthesis. Its function is as follows. Catalyzes the ATP-dependent conversion of 7-carboxy-7-deazaguanine (CDG) to 7-cyano-7-deazaguanine (preQ(0)). This is 7-cyano-7-deazaguanine synthase from Escherichia coli (strain SMS-3-5 / SECEC).